The chain runs to 250 residues: NAD(P)H-quinone oxidoreductase subunit S, chloroplastic (250 aa).

A chloroplast-targeting transit peptide spans 1 to 48 (MATSSITIPTIRTPIHRSKFLGQTHQFSTVNRSVFPPPKQQSKLYQVK). A Glycyl lysine isopeptide (Lys-Gly) (interchain with G-Cter in ubiquitin) cross-link involves residue lysine 52. 2 stretches are compositionally biased toward basic and acidic residues: residues 76–94 (QRNIEDEQETSKAENNETE) and 106–115 (VPEDGFEKEM). Disordered stretches follow at residues 76-163 (QRNI…KPKA) and 222-250 (REKGPPGKNPKSCILEPLIEQMQKEEAAP). The segment covering 136 to 146 (NPPPPPPPPPA) has biased composition (pro residues).

In terms of assembly, part of the chloroplast NDH complex, composed of a mixture of chloroplast and nucleus encoded subunits. Component of the electron donor-binding subcomplex, at least composed of NDHS, NDHT and NDHU. Interacts with the NDH subcomplex A via the protein NDHT and NDHU. Arg-193 is the critical site for the high affinity binding of NDH to ferredoxin.

It is found in the plastid. The protein localises to the chloroplast thylakoid membrane. It catalyses the reaction a plastoquinone + NADH + (n+1) H(+)(in) = a plastoquinol + NAD(+) + n H(+)(out). The catalysed reaction is a plastoquinone + NADPH + (n+1) H(+)(in) = a plastoquinol + NADP(+) + n H(+)(out). NDH shuttles electrons from NAD(P)H:plastoquinone, via FMN and iron-sulfur (Fe-S) centers, to quinones in the photosynthetic chain and possibly in a chloroplast respiratory chain. The immediate electron acceptor for the enzyme in this species is believed to be plastoquinone. Couples the redox reaction to proton translocation, and thus conserves the redox energy in a proton gradient. Required for the efficient operation of ferredoxin-dependent plastoquinone reduction. Forms the electron donor-binding subcomplex in association with the NDHT and NDHU subunits. This Arabidopsis thaliana (Mouse-ear cress) protein is NAD(P)H-quinone oxidoreductase subunit S, chloroplastic.